Here is a 133-residue protein sequence, read N- to C-terminus: ATP synthase epsilon chain (133 aa).

The disordered stretch occupies residues Ala81–Asp110.

Belongs to the ATPase epsilon chain family. F-type ATPases have 2 components, CF(1) - the catalytic core - and CF(0) - the membrane proton channel. CF(1) has five subunits: alpha(3), beta(3), gamma(1), delta(1), epsilon(1). CF(0) has three main subunits: a, b and c.

The protein localises to the cell membrane. Its function is as follows. Produces ATP from ADP in the presence of a proton gradient across the membrane. In Shouchella clausii (strain KSM-K16) (Alkalihalobacillus clausii), this protein is ATP synthase epsilon chain.